Reading from the N-terminus, the 245-residue chain is Uridylate kinase (245 aa).

15 to 18 (KLSG) contacts ATP. The involved in allosteric activation by GTP stretch occupies residues 23–28 (GDEGFG). Position 57 (G57) interacts with UMP. 2 residues coordinate ATP: G58 and R62. Residues D77 and 138–145 (TGNPFCTT) contribute to the UMP site. Positions 165, 171, and 174 each coordinate ATP.

Belongs to the UMP kinase family. Homohexamer.

The protein resides in the cytoplasm. The enzyme catalyses UMP + ATP = UDP + ADP. Its pathway is pyrimidine metabolism; CTP biosynthesis via de novo pathway; UDP from UMP (UMPK route): step 1/1. Allosterically activated by GTP. Inhibited by UTP. In terms of biological role, catalyzes the reversible phosphorylation of UMP to UDP. In Shewanella baltica (strain OS155 / ATCC BAA-1091), this protein is Uridylate kinase.